The following is a 573-amino-acid chain: Phosphoenolpyruvate-protein phosphotransferase (573 aa).

His190 serves as the catalytic Tele-phosphohistidine intermediate. Positions 297 and 334 each coordinate phosphoenolpyruvate. Mg(2+) is bound by residues Glu433 and Asp457. Phosphoenolpyruvate-binding positions include 456–457 (ND) and Arg467. Cys504 serves as the catalytic Proton donor.

Belongs to the PEP-utilizing enzyme family. As to quaternary structure, homodimer. Requires Mg(2+) as cofactor.

The protein localises to the cytoplasm. The catalysed reaction is L-histidyl-[protein] + phosphoenolpyruvate = N(pros)-phospho-L-histidyl-[protein] + pyruvate. Functionally, general (non sugar-specific) component of the phosphoenolpyruvate-dependent sugar phosphotransferase system (sugar PTS). This major carbohydrate active-transport system catalyzes the phosphorylation of incoming sugar substrates concomitantly with their translocation across the cell membrane. Enzyme I transfers the phosphoryl group from phosphoenolpyruvate (PEP) to the phosphoryl carrier protein (HPr). This Borreliella burgdorferi (strain ATCC 35210 / DSM 4680 / CIP 102532 / B31) (Borrelia burgdorferi) protein is Phosphoenolpyruvate-protein phosphotransferase (ptsI).